A 132-amino-acid polypeptide reads, in one-letter code: Agouti-related protein (132 aa).

The signal sequence occupies residues 1–20; sequence MLTAAVLSCALLLALPATRG. Positions 21–82 are excised as a propeptide; sequence AQMGLAPMEG…VLDLQDREPR (62 aa). Cystine bridges form between C87–C102, C94–C108, C101–C119, C105–C129, and C110–C117. Residues 87 to 129 enclose the Agouti domain; that stretch reads CVRLHESCLGQQVPCCDPCATCYCRFFNAFCYCRKLGTAMNPC. The tract at residues 111–113 is interaction with melanocortin receptors; the sequence is RFF.

As to quaternary structure, interacts with melanocortin receptors MC3R, MC4R and MC5R. In terms of tissue distribution, expressed primarily in the adrenal gland, subthalamic nucleus, and hypothalamus, with a lower level of expression occurring in testis, lung, and kidney.

It localises to the secreted. The protein localises to the golgi apparatus lumen. In terms of biological role, plays a role in weight homeostasis. Involved in the control of feeding behavior through the central melanocortin system. Acts as alpha melanocyte-stimulating hormone antagonist by inhibiting cAMP production mediated by stimulation of melanocortin receptors within the hypothalamus and adrenal gland. Has very low activity with MC5R. Is an inverse agonist for MC3R and MC4R being able to suppress their constitutive activity. It promotes MC3R and MC4R endocytosis in an arrestin-dependent manner. The sequence is that of Agouti-related protein (AGRP) from Homo sapiens (Human).